Consider the following 352-residue polypeptide: Rhodopsin, deep-sea form (352 aa).

Topologically, residues 1-36 (MNGTEGPNFYIPMSNITGVVRSPFEYPQYYLAEPWA) are extracellular. 2 N-linked (GlcNAc...) asparagine glycosylation sites follow: asparagine 2 and asparagine 15. A helical transmembrane segment spans residues 37–61 (YTILAAYMFTLILLGFPVNFLTLYV). At 62–73 (TIEHKKLRTPLN) the chain is on the cytoplasmic side. Residues 74-98 (YILLNLAVANLFMVFGGFTTTVYTS) form a helical membrane-spanning segment. Residues 99 to 113 (MHGYFVFGETGCNLE) are Extracellular-facing. A disulfide bridge links cysteine 110 with cysteine 187. A helical transmembrane segment spans residues 114-133 (GYFATLGGEISLWSLVVLAI). Residues 134–152 (ERWVVVCKPMSNFRFGENH) lie on the Cytoplasmic side of the membrane. A helical membrane pass occupies residues 153–176 (AIMGLAFTWIMANSCAMPPLFGWS). The Extracellular segment spans residues 177-202 (RYIPEGMQCSCGVDYYTLKPEVNNES). Asparagine 200 is a glycosylation site (N-linked (GlcNAc...) asparagine). Residues 203-230 (FVIYMFIVHFSVPLTIISFCYGRLVCTV) traverse the membrane as a helical segment. The Cytoplasmic segment spans residues 231 to 252 (KEAAAQQQESETTQRAEREVTR). A helical membrane pass occupies residues 253-276 (MVVIMVIAFLVCWVPYASVAWYIF). Over 277-284 (THQGSTFG) the chain is Extracellular. A helical membrane pass occupies residues 285–309 (PVFMTVPSFFAKSSAIYNPLIYICL). Lysine 296 carries the N6-(retinylidene)lysine modification. The Cytoplasmic portion of the chain corresponds to 310–352 (NSQFRNCMITTLFCGKNPFQEEEGASTTASKTEASSVSSVSPA). Cysteine 323 carries S-palmitoyl cysteine lipidation. A disordered region spans residues 333 to 352 (GASTTASKTEASSVSSVSPA). Residues 334–352 (ASTTASKTEASSVSSVSPA) are compositionally biased toward low complexity.

It belongs to the G-protein coupled receptor 1 family. Opsin subfamily. In terms of processing, phosphorylated on some or all of the serine and threonine residues present in the C-terminal region. As to expression, rod shaped photoreceptor cells which mediates vision in dim light.

Its subcellular location is the membrane. Its function is as follows. Visual pigments such as rhodopsin and porphyropsin are light-absorbing molecules that mediate vision. Rhodopsin consists of an apoprotein, opsin, covalently linked to 11-cis-retinal. This receptor is coupled to the activation of phospholipase C. Porphyropsin consists of opsin covalently linked to 11-cis 3,4-didehydroretinal. The polypeptide is Rhodopsin, deep-sea form (Anguilla anguilla (European freshwater eel)).